Consider the following 143-residue polypeptide: uncharacterized protein (143 aa).

A signal peptide spans methionine 1–alanine 24.

This is an uncharacterized protein from Bacillus subtilis (strain 168).